We begin with the raw amino-acid sequence, 474 residues long: Serine/threonine-protein kinase ksp1 (474 aa).

The Protein kinase domain maps to 9–280 (YKVERPLNKG…EAVLAVTKWT (272 aa)). Residues 15-23 (LNKGSYGTV) and K43 each bind ATP. D137 functions as the Proton acceptor in the catalytic mechanism. The segment at 345-373 (VDENISTSSSPRSPASLAPVNNSERSYDS) is disordered. Over residues 350–363 (STSSSPRSPASLAP) the composition is skewed to low complexity. Phosphoserine is present on residues S353, S354, S357, S378, S404, and S413.

Belongs to the protein kinase superfamily. Ser/Thr protein kinase family.

It localises to the cytoplasm. It is found in the nucleus. It carries out the reaction L-seryl-[protein] + ATP = O-phospho-L-seryl-[protein] + ADP + H(+). The catalysed reaction is L-threonyl-[protein] + ATP = O-phospho-L-threonyl-[protein] + ADP + H(+). The protein is Serine/threonine-protein kinase ksp1 (ksp1) of Schizosaccharomyces pombe (strain 972 / ATCC 24843) (Fission yeast).